A 507-amino-acid polypeptide reads, in one-letter code: Maturase K (507 aa).

Belongs to the intron maturase 2 family. MatK subfamily.

Its subcellular location is the plastid. It localises to the chloroplast. In terms of biological role, usually encoded in the trnK tRNA gene intron. Probably assists in splicing its own and other chloroplast group II introns. This is Maturase K from Liriodendron tulipifera (Tuliptree).